Consider the following 476-residue polypeptide: Aspartyl/glutamyl-tRNA(Asn/Gln) amidotransferase subunit B (476 aa).

This sequence belongs to the GatB/GatE family. GatB subfamily. Heterotrimer of A, B and C subunits.

It carries out the reaction L-glutamyl-tRNA(Gln) + L-glutamine + ATP + H2O = L-glutaminyl-tRNA(Gln) + L-glutamate + ADP + phosphate + H(+). The enzyme catalyses L-aspartyl-tRNA(Asn) + L-glutamine + ATP + H2O = L-asparaginyl-tRNA(Asn) + L-glutamate + ADP + phosphate + 2 H(+). In terms of biological role, allows the formation of correctly charged Asn-tRNA(Asn) or Gln-tRNA(Gln) through the transamidation of misacylated Asp-tRNA(Asn) or Glu-tRNA(Gln) in organisms which lack either or both of asparaginyl-tRNA or glutaminyl-tRNA synthetases. The reaction takes place in the presence of glutamine and ATP through an activated phospho-Asp-tRNA(Asn) or phospho-Glu-tRNA(Gln). This chain is Aspartyl/glutamyl-tRNA(Asn/Gln) amidotransferase subunit B, found in Lacticaseibacillus paracasei (strain ATCC 334 / BCRC 17002 / CCUG 31169 / CIP 107868 / KCTC 3260 / NRRL B-441) (Lactobacillus paracasei).